Reading from the N-terminus, the 145-residue chain is 3-hydroxyacyl-[acyl-carrier-protein] dehydratase FabZ (145 aa).

His-51 is an active-site residue.

Belongs to the thioester dehydratase family. FabZ subfamily.

The protein resides in the cytoplasm. It catalyses the reaction a (3R)-hydroxyacyl-[ACP] = a (2E)-enoyl-[ACP] + H2O. Its function is as follows. Involved in unsaturated fatty acids biosynthesis. Catalyzes the dehydration of short chain beta-hydroxyacyl-ACPs and long chain saturated and unsaturated beta-hydroxyacyl-ACPs. This chain is 3-hydroxyacyl-[acyl-carrier-protein] dehydratase FabZ, found in Staphylococcus saprophyticus subsp. saprophyticus (strain ATCC 15305 / DSM 20229 / NCIMB 8711 / NCTC 7292 / S-41).